A 294-amino-acid polypeptide reads, in one-letter code: MTVDFGRVLTAMVSPFDKNMELNLPMARKLARHLVDSGSDGLVVCGTTGESPTLSKEEKLELFRTVVDEVGGRAVVVAGTGSYSTKDSIALTQAAEKLGVDAVMLVCPYYNKPSQDGLYQHFRAVAESTNLPVMIYNIPGRTSINLLPQTCARLAEIGNIVAIKEASGNMDQATELRRLLPDHFHIYSGDDSMTLPLLAVGGKGVVSVAAHLVGGKIQEMINAFTSGNITLAAKLHSSLFPLIKGLFMTTNPVPVKAALGMLGLNVGPPRLPLVEATEQEKEKLRVLLREAQLL.

Residue T48 coordinates pyruvate. The active-site Proton donor/acceptor is the Y136. Catalysis depends on K164, which acts as the Schiff-base intermediate with substrate. V206 serves as a coordination point for pyruvate.

The protein belongs to the DapA family. As to quaternary structure, homotetramer; dimer of dimers.

Its subcellular location is the cytoplasm. The enzyme catalyses L-aspartate 4-semialdehyde + pyruvate = (2S,4S)-4-hydroxy-2,3,4,5-tetrahydrodipicolinate + H2O + H(+). It participates in amino-acid biosynthesis; L-lysine biosynthesis via DAP pathway; (S)-tetrahydrodipicolinate from L-aspartate: step 3/4. Its function is as follows. Catalyzes the condensation of (S)-aspartate-beta-semialdehyde [(S)-ASA] and pyruvate to 4-hydroxy-tetrahydrodipicolinate (HTPA). In Desulforudis audaxviator (strain MP104C), this protein is 4-hydroxy-tetrahydrodipicolinate synthase.